We begin with the raw amino-acid sequence, 452 residues long: uncharacterized protein (452 aa).

The segment at 1–452 (MTAVSSNRNP…LRKPEADTAL (452 aa)) is disordered. Polar residues-rich tracts occupy residues 29-41 (RTGTPRTTAVSSN), 95-111 (SPQTGTPRTTAVSSNRN), 129-144 (SPQTGTPGTTAVSSNR), and 163-176 (SPQTGTPGTTAVSS). Over residues 177-193 (NRDHEDDGCLLKQESRG) the composition is skewed to basic and acidic residues. Composition is skewed to polar residues over residues 197-212 (SPQTGTPGTTAVSSNR), 231-245 (SPQTGTPGTTAVSSN), 265-280 (SPQTGTPRTTAVSSNR), 299-314 (SPQTGIPRTTAVSSNR), 333-347 (SPQTGTTRTTAVSSK), 376-394 (TAVSSNRDPRTTAVSSNRN), and 412-426 (SPQTGTPGTTAVSSN). Residues 439 to 452 (EPQELRKPEADTAL) show a composition bias toward basic and acidic residues.

This is an uncharacterized protein from Homo sapiens (Human).